Here is a 375-residue protein sequence, read N- to C-terminus: Alcohol dehydrogenase 1 (375 aa).

An N-acetylserine modification is found at Ser-1. Cys-46, His-67, Cys-97, Cys-100, Cys-103, Cys-111, and Cys-174 together coordinate Zn(2+). NAD(+)-binding positions include 199–204, Asp-223, Lys-228, 293–295, and Arg-370; these read GLGGVG and VGV.

It belongs to the zinc-containing alcohol dehydrogenase family. Class-I subfamily. Homodimer. Requires Zn(2+) as cofactor.

Its subcellular location is the cytoplasm. It catalyses the reaction a primary alcohol + NAD(+) = an aldehyde + NADH + H(+). It carries out the reaction a secondary alcohol + NAD(+) = a ketone + NADH + H(+). The chain is Alcohol dehydrogenase 1 from Naja naja (Indian cobra).